The sequence spans 360 residues: Galactoside alpha-(1,2)-fucosyltransferase 1 (360 aa).

The Cytoplasmic segment spans residues 1–8; sequence MWAPGHHH. The helical; Signal-anchor for type II membrane protein transmembrane segment at 9–27 threads the bilayer; the sequence is LCLIFLLTCVFACVFFLLI. Over 28-360 the chain is Lumenal; it reads HQNLFHSGLD…GINADLSPLQ (333 aa). 3 N-linked (GlcNAc...) asparagine glycosylation sites follow: Asn-65, Asn-301, and Asn-327.

The protein belongs to the glycosyltransferase 11 family. As to expression, expressed in brain, intestine and kidney.

The protein resides in the golgi apparatus. It is found in the golgi stack membrane. The enzyme catalyses a ganglioside GM1 + GDP-beta-L-fucose = a ganglioside Fuc-GM1 + GDP + H(+). It carries out the reaction a beta-D-galactosyl-(1-&gt;4)-N-acetyl-beta-D-glucosaminyl derivative + GDP-beta-L-fucose = an alpha-L-Fuc-(1-&gt;2)-beta-D-Gal-(1-&gt;4)-beta-D-GlcNAc derivative + GDP + H(+). The catalysed reaction is a ganglioside GA1 + GDP-beta-L-fucose = a ganglioside Fuc-GA1 + GDP + H(+). It catalyses the reaction a beta-D-Gal-(1-&gt;3)-beta-D-GlcNAc-(1-&gt;3)-beta-D-Gal-(1-&gt;4)-beta-D-Glc-(1&lt;-&gt;1')-Cer(d18:1(4E)) + GDP-beta-L-fucose = alpha-L-fucosyl-(1-&gt;2)- beta-D-galactosyl-(1-&gt;3)-N-acetyl-beta-D-glucosaminyl-(1-&gt;3)-beta-D-galactosyl-(1-&gt;4)-beta-D-glucosyl-(1&lt;-&gt;1')-N-acylsphing-4-enine + GDP + H(+). The enzyme catalyses a neolactoside nLc4Cer(d18:1(4E)) + GDP-beta-L-fucose = a neolactoside IV(2)-alpha-Fuc-nLc4Cer(d18:1(4E)) + GDP + H(+). It carries out the reaction beta-D-galactosyl-(1-&gt;3)-N-acetyl-D-galactosamine + GDP-beta-L-fucose = alpha-L-fucosyl-(1-&gt;2)-beta-D-galactosyl-(1-&gt;3)-N-acetyl-D-galactosamine + GDP + H(+). It functions in the pathway protein modification; protein glycosylation. In terms of biological role, catalyzes the transfer of L-fucose, from a guanosine diphosphate-beta-L-fucose, to the terminal galactose residue of glycoconjugates through an alpha(1,2) linkage leading to H antigen synthesis that is an intermediate substrate in the synthesis of ABO blood group antigens. H antigen is essential for maturation of the glomerular layer of the main olfactory bulb, in cell migration and early cell-cell contacts during tumor associated angiogenesis. Preferentially fucosylates soluble lactose and to a lesser extent, fucosylates glycolipids gangliosides GA1 and GM1a. This is Galactoside alpha-(1,2)-fucosyltransferase 1 from Bos taurus (Bovine).